A 622-amino-acid polypeptide reads, in one-letter code: Low affinity potassium transport system protein Kup (622 aa).

Transmembrane regions (helical) follow at residues Leu-9–Leu-29, Val-49–Leu-69, Val-103–Ile-123, Pro-137–Ile-157, Val-165–Leu-185, Val-213–Ala-233, Trp-247–Leu-267, Pro-276–Ala-296, Ile-337–Phe-357, Leu-363–Thr-383, Phe-396–Leu-416, and Leu-419–Thr-439.

It belongs to the HAK/KUP transporter (TC 2.A.72) family.

The protein resides in the cell inner membrane. It catalyses the reaction K(+)(in) + H(+)(in) = K(+)(out) + H(+)(out). In terms of biological role, responsible for the low-affinity transport of potassium into the cell. Likely operates as a K(+):H(+) symporter. This is Low affinity potassium transport system protein Kup from Shigella boydii serotype 18 (strain CDC 3083-94 / BS512).